Here is a 297-residue protein sequence, read N- to C-terminus: 4-hydroxy-tetrahydrodipicolinate synthase (297 aa).

A pyruvate-binding site is contributed by threonine 50. Tyrosine 138 functions as the Proton donor/acceptor in the catalytic mechanism. The active-site Schiff-base intermediate with substrate is lysine 166. Isoleucine 208 contacts pyruvate.

Belongs to the DapA family. Homotetramer; dimer of dimers.

The protein resides in the cytoplasm. The catalysed reaction is L-aspartate 4-semialdehyde + pyruvate = (2S,4S)-4-hydroxy-2,3,4,5-tetrahydrodipicolinate + H2O + H(+). Its pathway is amino-acid biosynthesis; L-lysine biosynthesis via DAP pathway; (S)-tetrahydrodipicolinate from L-aspartate: step 3/4. Its function is as follows. Catalyzes the condensation of (S)-aspartate-beta-semialdehyde [(S)-ASA] and pyruvate to 4-hydroxy-tetrahydrodipicolinate (HTPA). The sequence is that of 4-hydroxy-tetrahydrodipicolinate synthase from Desulfotalea psychrophila (strain LSv54 / DSM 12343).